Reading from the N-terminus, the 601-residue chain is Elongation factor 4 (601 aa).

Residues 6-188 (NYIRNFSIVA…AIVTQLPSPR (183 aa)) enclose the tr-type G domain. GTP-binding positions include 18–23 (DHGKST) and 135–138 (NKVD).

Belongs to the TRAFAC class translation factor GTPase superfamily. Classic translation factor GTPase family. LepA subfamily.

It localises to the cell inner membrane. The enzyme catalyses GTP + H2O = GDP + phosphate + H(+). Required for accurate and efficient protein synthesis under certain stress conditions. May act as a fidelity factor of the translation reaction, by catalyzing a one-codon backward translocation of tRNAs on improperly translocated ribosomes. Back-translocation proceeds from a post-translocation (POST) complex to a pre-translocation (PRE) complex, thus giving elongation factor G a second chance to translocate the tRNAs correctly. Binds to ribosomes in a GTP-dependent manner. The sequence is that of Elongation factor 4 from Bartonella henselae (strain ATCC 49882 / DSM 28221 / CCUG 30454 / Houston 1) (Rochalimaea henselae).